The following is a 144-amino-acid chain: Phosphomevalonate dehydratase small subunit (144 aa).

S65 (proton acceptor) is an active-site residue.

Belongs to the AcnX type II small subunit family. In terms of assembly, heterodimer composed of a large subunit (PMDh-L) and a small subunit (PMDh-S).

It catalyses the reaction (R)-5-phosphomevalonate = (2E)-3-methyl-5-phosphooxypent-2-enoate + H2O. The protein operates within isoprenoid biosynthesis; isopentenyl diphosphate biosynthesis via mevalonate pathway. Component of a hydro-lyase that catalyzes the dehydration of mevalonate 5-phosphate (MVA5P) to form trans-anhydromevalonate 5-phosphate (tAHMP). Involved in the archaeal mevalonate (MVA) pathway, which provides fundamental precursors for isoprenoid biosynthesis, such as isopentenyl diphosphate (IPP) and dimethylallyl diphosphate (DMAPP). The sequence is that of Phosphomevalonate dehydratase small subunit from Methanosarcina mazei (strain ATCC BAA-159 / DSM 3647 / Goe1 / Go1 / JCM 11833 / OCM 88) (Methanosarcina frisia).